Reading from the N-terminus, the 605-residue chain is Capsid scaffolding protein (605 aa).

Active-site charge relay system residues include H48, S116, and H139. The interval 235–274 (ASDAPDLQKPDKALQSPPPASTDPATMLSGNAGEGATACG) is disordered. The segment at 281-300 (QDLISVPRNTFMTLLQTNLD) is interaction with pAP. Disordered stretches follow at residues 403–432 (DYVPAPSRSNKRKRDPEEDEEGGGLFPGED) and 489–588 (PHQS…KSVS). The short motif at 410–416 (RSNKRKR) is the Nuclear localization signal element. The span at 568-579 (ASASGVAQSKEP) shows a compositional bias: polar residues. The interval 585 to 605 (KSVSAHLKSIFCEELLNKRVA) is interaction with major capsid protein.

The protein belongs to the herpesviridae capsid scaffolding protein family. Homomultimer. Interacts with major capsid protein. As to quaternary structure, exists in a monomer-dimer equilibrium with the dimer being the active species. Capsid scaffolding protein is cleaved by assemblin after formation of the spherical procapsid. As a result, the capsid obtains its mature, icosahedral shape. Cleavages occur at two or more sites: release (R-site) and maturation (M-site).

Its subcellular location is the host cytoplasm. It is found in the host nucleus. It carries out the reaction Cleaves -Ala-|-Ser- and -Ala-|-Ala- bonds in the scaffold protein.. In terms of biological role, acts as a scaffold protein by binding major capsid protein in the cytoplasm, inducing the nuclear localization of both proteins. Multimerizes in the nucleus such as major capsid protein forms the icosahedral T=16 capsid. Autocatalytic cleavage releases the assembly protein, and subsequently abolishes interaction with major capsid protein. Cleavages products are evicted from the capsid before or during DNA packaging. Its function is as follows. Protease that plays an essential role in virion assembly within the nucleus. Catalyzes the cleavage of the assembly protein after formation of the spherical procapsid. By that cleavage, the capsid matures and gains its icosahedral shape. The cleavage sites seem to include -Ala-Ser-, -Ala-Ala-, as well as Ala-Thr bonds. Assemblin and cleavages products are evicted from the capsid before or during DNA packaging. Functionally, plays a major role in capsid assembly. Acts as a scaffold protein by binding major capsid protein. Multimerizes in the nucleus such as major capsid protein forms the icosahedral T=16 capsid. Cleaved by assemblin after capsid completion. The cleavages products are evicted from the capsid before or during DNA packaging. In Homo sapiens (Human), this protein is Capsid scaffolding protein.